The following is a 293-amino-acid chain: 4-diphosphocytidyl-2-C-methyl-D-erythritol kinase (293 aa).

Lys-16 is a catalytic residue. 99–109 is an ATP binding site; the sequence is PMGAGLGGGSS. The active site involves Asp-141.

Belongs to the GHMP kinase family. IspE subfamily.

The enzyme catalyses 4-CDP-2-C-methyl-D-erythritol + ATP = 4-CDP-2-C-methyl-D-erythritol 2-phosphate + ADP + H(+). Its pathway is isoprenoid biosynthesis; isopentenyl diphosphate biosynthesis via DXP pathway; isopentenyl diphosphate from 1-deoxy-D-xylulose 5-phosphate: step 3/6. Its function is as follows. Catalyzes the phosphorylation of the position 2 hydroxy group of 4-diphosphocytidyl-2C-methyl-D-erythritol. The chain is 4-diphosphocytidyl-2-C-methyl-D-erythritol kinase from Burkholderia ambifaria (strain MC40-6).